The primary structure comprises 402 residues: Tryptophan synthase beta chain (402 aa).

The residue at position 91 (Lys-91) is an N6-(pyridoxal phosphate)lysine.

This sequence belongs to the TrpB family. As to quaternary structure, tetramer of two alpha and two beta chains. The cofactor is pyridoxal 5'-phosphate.

It carries out the reaction (1S,2R)-1-C-(indol-3-yl)glycerol 3-phosphate + L-serine = D-glyceraldehyde 3-phosphate + L-tryptophan + H2O. It participates in amino-acid biosynthesis; L-tryptophan biosynthesis; L-tryptophan from chorismate: step 5/5. Functionally, the beta subunit is responsible for the synthesis of L-tryptophan from indole and L-serine. This chain is Tryptophan synthase beta chain (trpB), found in Lactococcus lactis subsp. lactis (strain IL1403) (Streptococcus lactis).